A 217-amino-acid polypeptide reads, in one-letter code: Adenylate kinase (217 aa).

11–16 contributes to the ATP binding site; it reads GAGKGT. Residues 31–60 form an NMP region; the sequence is STGDMFREAMANKTPVGLEAKSYIDKGDLV. Residues T32, R37, 58-60, 86-89, and Q93 each bind AMP; these read DLV and GFPR. Residues 127–165 form an LID region; that stretch reads ARFMCKNCGATYNKFSKKPKVEGTCDRCGGHEFYQREDD. ATP is bound at residue R128. Zn(2+) is bound by residues C131 and C134. Residue 137-138 participates in ATP binding; the sequence is TY. Residues C151 and C154 each coordinate Zn(2+). Residues R162 and R173 each contribute to the AMP site. Q201 is an ATP binding site.

It belongs to the adenylate kinase family. Monomer.

It is found in the cytoplasm. The enzyme catalyses AMP + ATP = 2 ADP. The protein operates within purine metabolism; AMP biosynthesis via salvage pathway; AMP from ADP: step 1/1. Its function is as follows. Catalyzes the reversible transfer of the terminal phosphate group between ATP and AMP. Plays an important role in cellular energy homeostasis and in adenine nucleotide metabolism. The sequence is that of Adenylate kinase from Lactobacillus delbrueckii subsp. bulgaricus (strain ATCC 11842 / DSM 20081 / BCRC 10696 / JCM 1002 / NBRC 13953 / NCIMB 11778 / NCTC 12712 / WDCM 00102 / Lb 14).